Here is a 237-residue protein sequence, read N- to C-terminus: Large ribosomal subunit protein uL1 (237 aa).

It belongs to the universal ribosomal protein uL1 family. As to quaternary structure, part of the 50S ribosomal subunit.

Binds directly to 23S rRNA. The L1 stalk is quite mobile in the ribosome, and is involved in E site tRNA release. Its function is as follows. Protein L1 is also a translational repressor protein, it controls the translation of the L11 operon by binding to its mRNA. The sequence is that of Large ribosomal subunit protein uL1 from Chloroflexus aggregans (strain MD-66 / DSM 9485).